Reading from the N-terminus, the 202-residue chain is Coiled-coil domain-containing protein 85B (202 aa).

The residue at position 1 (methionine 1) is an N-acetylmethionine. 2 coiled-coil regions span residues 43–90 and 118–147; these read GRLM…ERQR and QKLA…LGEE. A disordered region spans residues 148–202; that stretch reads WGPRGGPSGAGGSGAGPAPELALPPCGPRDLGDGSSSTGSVGSPDQLPLACSPDD. The span at 150-162 shows a compositional bias: gly residues; the sequence is PRGGPSGAGGSGA. The segment covering 180-190 has biased composition (low complexity); that stretch reads DGSSSTGSVGS.

This sequence belongs to the CCDC85 family. Interacts with CEBPB. Interacts with EURL. May interact with CEBPD. Interacts with MCRS1. Interacts with TCF7L2; competes with CTNNB1. Interacts with ANKRD26. Interacts with the beta-catenin family proteins ARVCF, CTNND1, CTNND2 and PKP4. As to quaternary structure, (Microbial infection) Interacts with the viral phosphoprotein hepatitis delta antigen (HDAG); this interaction affects hepatitis delta virus (HDV) genomic replication in intact cells. Widely expressed including liver.

It localises to the nucleus. Its subcellular location is the cytoplasm. The protein localises to the cytoskeleton. The protein resides in the microtubule organizing center. It is found in the centrosome. It localises to the cell junction. Its subcellular location is the adherens junction. Functionally, functions as a transcriptional repressor. May inhibit the activity of CTNNB1 in a TP53-dependent manner and thus regulate cell growth. May function in adipocyte differentiation, negatively regulating mitotic clonal expansion. Plays a role in cell-cell adhesion and epithelium development through its interaction with proteins of the beta-catenin family. Its function is as follows. (Microbial infection) Plays a role in hepatitis delta virus (HDV) genomic replication. This is Coiled-coil domain-containing protein 85B (CCDC85B) from Homo sapiens (Human).